The chain runs to 181 residues: MASVQGLIKIVAITGGVWLSGKITAHSLVSVPALLQTRSADGLSPCTILRVWRRIYEQGHRHSPQIAACTSTAFAYLAWCASDRTPRLLYGTAACSVMGIVPYTLLFMGPTNSRLLERSAAEEEKVPGATRGEDMVNVPSEMTTEELLSHWRFLAGIRGLLPLAGGILGLFAALYSNEGAR.

4 helical membrane passes run 1–21 (MASVQGLIKIVAITGGVWLSG), 65–81 (QIAACTSTAFAYLAWCA), 88–108 (LLYGTAACSVMGIVPYTLLFM), and 153–173 (FLAGIRGLLPLAGGILGLFAA).

It belongs to the anthrone oxygenase family. As to expression, endocrocin is specifically produced in conidia.

The protein localises to the membrane. Functionally, anthrone oxygenase; part of the gene cluster that mediates the biosynthesis of endocrocin, a simple anthraquinone interesting for many biotechnological applications. The pathway begins with the synthesis of atrochrysone thioester by the polyketide synthase (PKS) encA. The atrochrysone carboxyl ACP thioesterase encB then breaks the thioester bond and releases the atrochrysone carboxylic acid from encA. The atrochrysone carboxylic acid is then converted to endocrocin anthrone which is further oxidized into endocrocin by the anthrone oxygenase encC. The exact function of encD has not been identified yet, but it negatively regulates endocrocin production, likely through the modification of endocrocin itself. This Aspergillus fumigatus (strain ATCC MYA-4609 / CBS 101355 / FGSC A1100 / Af293) (Neosartorya fumigata) protein is Anthrone oxygenase encC.